The primary structure comprises 328 residues: Beta-ketoacyl-[acyl-carrier-protein] synthase III 2 (328 aa).

Catalysis depends on residues cysteine 113 and histidine 255. The interval 256 to 260 is ACP-binding; it reads QANAR. Asparagine 285 is a catalytic residue.

Belongs to the thiolase-like superfamily. FabH family. As to quaternary structure, homodimer.

Its subcellular location is the cytoplasm. The catalysed reaction is malonyl-[ACP] + acetyl-CoA + H(+) = 3-oxobutanoyl-[ACP] + CO2 + CoA. Its pathway is lipid metabolism; fatty acid biosynthesis. Its function is as follows. Catalyzes the condensation reaction of fatty acid synthesis by the addition to an acyl acceptor of two carbons from malonyl-ACP. Catalyzes the first condensation reaction which initiates fatty acid synthesis and may therefore play a role in governing the total rate of fatty acid production. Possesses both acetoacetyl-ACP synthase and acetyl transacylase activities. Its substrate specificity determines the biosynthesis of branched-chain and/or straight-chain of fatty acids. In Lactiplantibacillus plantarum (strain ATCC BAA-793 / NCIMB 8826 / WCFS1) (Lactobacillus plantarum), this protein is Beta-ketoacyl-[acyl-carrier-protein] synthase III 2.